A 597-amino-acid polypeptide reads, in one-letter code: Blastula protease 10 (597 aa).

The N-terminal stretch at 1-16 (MKLILFLSGLVSLVLC) is a signal peptide. Residues 17-93 (TLAAPTGDQK…DEMTGRKKRK (77 aa)) constitute a propeptide, activation peptide. Residues 24 to 67 (DQKEIHTETPPPKKPSETTTPGALKTPQPEPKDEEPTPGAFQGD) form a disordered region. The Peptidase M12A domain maps to 93–294 (KATIYESQRW…ELANLIYECD (202 aa)). Intrachain disulfides connect Cys-134/Cys-293, Cys-162/Cys-182, Cys-299/Cys-315, Cys-305/Cys-317, Cys-319/Cys-328, Cys-339/Cys-365, Cys-392/Cys-412, Cys-484/Cys-510, and Cys-537/Cys-557. His-190 lines the Zn(2+) pocket. Glu-191 is a catalytic residue. Residues His-194 and His-200 each contribute to the Zn(2+) site. The EGF-like domain maps to 295-329 (DIEDCAGANECLNGGYHDTECNCVCPSGYNGDLCE). CUB domains are found at residues 339-449 (CSER…YRIV) and 484-595 (CGGS…YRAI).

Zn(2+) is required as a cofactor.

The protein resides in the cytoplasm. It localises to the perinuclear region. Its subcellular location is the cell cortex. The protein localises to the secreted. It is found in the extracellular space. Functionally, could be involved in the differentiation of ectodermal lineages and subsequent patterning of the embryo. The chain is Blastula protease 10 (BP10) from Paracentrotus lividus (Common sea urchin).